Consider the following 580-residue polypeptide: DNA ligase B (580 aa).

K135 (N6-AMP-lysine intermediate) is an active-site residue.

The protein belongs to the NAD-dependent DNA ligase family. LigB subfamily.

It catalyses the reaction NAD(+) + (deoxyribonucleotide)n-3'-hydroxyl + 5'-phospho-(deoxyribonucleotide)m = (deoxyribonucleotide)n+m + AMP + beta-nicotinamide D-nucleotide.. In terms of biological role, catalyzes the formation of phosphodiester linkages between 5'-phosphoryl and 3'-hydroxyl groups in double-stranded DNA using NAD as a coenzyme and as the energy source for the reaction. The sequence is that of DNA ligase B from Photorhabdus laumondii subsp. laumondii (strain DSM 15139 / CIP 105565 / TT01) (Photorhabdus luminescens subsp. laumondii).